The chain runs to 186 residues: Fanconi anemia core complex-associated protein 20 (186 aa).

2 disordered regions span residues 1 to 30 (MEEE…PWFL) and 50 to 90 (TADW…GSKT). Residues 7 to 16 (LRGRLSRRRP) show a composition bias toward basic residues. The residue at position 119 (S119) is a Phosphoserine. Residues 150 to 186 (LLSCPLCQKAFDPKLTQLDVDSHLAQCLAECTEDVVW) form a UBZ2-type zinc finger. Residues C153, C156, H172, and C176 each contribute to the Zn(2+) site.

In terms of assembly, component of the Fanconi anemia (FA) complex. Interacts with FANCA; interaction is direct. Interacts with REV1.

The protein resides in the nucleus. It localises to the chromosome. In terms of biological role, component of the Fanconi anemia (FA) complex required to recruit the FA complex to DNA interstrand cross-links (ICLs) and promote ICLs repair. Following DNA damage recognizes and binds 'Lys-63'-linked ubiquitin generated by RNF8 at ICLs and recruits other components of the FA complex. Promotes translesion synthesis via interaction with REV1. In Mus musculus (Mouse), this protein is Fanconi anemia core complex-associated protein 20.